Consider the following 572-residue polypeptide: Protein misato homolog 1 (572 aa).

It belongs to the misato family.

It is found in the mitochondrion outer membrane. The protein localises to the cytoplasm. Involved in the regulation of mitochondrial distribution and morphology. Required for mitochondrial fusion and mitochondrial network formation. The sequence is that of Protein misato homolog 1 (MSTO1) from Bos taurus (Bovine).